The following is a 153-amino-acid chain: UPF0311 protein RPA1785 (153 aa).

This sequence belongs to the UPF0311 family.

The sequence is that of UPF0311 protein RPA1785 from Rhodopseudomonas palustris (strain ATCC BAA-98 / CGA009).